The following is a 584-amino-acid chain: MPVVDVDPDELRYLTGHSEKDDDELKSDLFNLGLEFEGWTEDDEFQLEFAPDRLDRLSVEGVARSLRYHYGDDRGVEIPNTNSADWTIEVEDQPDERPYVTGAIVRGLDMDEAALESLIQLQEKLHATMGRKRAKGAIGVHDLTMLKGDSVTDETGKSITYTSADPDEATFVPLDADAEMTPSEVMASHETGQTYGDLVADFDRVPAIYDAIGLFSFPPVINGRRTEVSVDSRDLFIEMTGTNQWTIDHMCNIVCYALAARGGQVEKVDVSYADDAPGEYAGKTLERPDFSVRTKTVTHDRIESILGVSLDSREVVDYAERAGLDATETESDDGVAYDVEVPPYRVDVIHPLDIIDDIGRALGFNSLEPTYPDVSTVGGRHERSRLEDAARDALVGLGFEDLLNFHMTNEVENFERMNLSTPEAEDGNDADTVGLADPVTIQEPYSEDYTILRTWALPSIMMVLENNTHRSYPQDLAEIGLAAGLDDSENTGVAEHRTVAAALARTDASYEDAKARLQALADAFDKDLETPPTTHPSFIGGRAAEVVLDGESVGVIGEIHPKVLVEHDLELPVAAFEFRLDALA.

Residues 290-369 (FSVRTKTVTH…RALGFNSLEP (80 aa)) form the B5 domain. Mg(2+) contacts are provided by D347, D353, D356, and D357.

The protein belongs to the phenylalanyl-tRNA synthetase beta subunit family. Type 2 subfamily. As to quaternary structure, tetramer of two alpha and two beta subunits. It depends on Mg(2+) as a cofactor.

It is found in the cytoplasm. It carries out the reaction tRNA(Phe) + L-phenylalanine + ATP = L-phenylalanyl-tRNA(Phe) + AMP + diphosphate + H(+). The protein is Phenylalanine--tRNA ligase beta subunit of Haloarcula marismortui (strain ATCC 43049 / DSM 3752 / JCM 8966 / VKM B-1809) (Halobacterium marismortui).